Consider the following 282-residue polypeptide: NADPH-dependent 7-cyano-7-deazaguanine reductase (282 aa).

88–90 (IES) is a binding site for substrate. 90–91 (SK) serves as a coordination point for NADPH. Cys-190 acts as the Thioimide intermediate in catalysis. The active-site Proton donor is the Asp-197. Residue 229–230 (HE) coordinates substrate. 258–259 (RG) serves as a coordination point for NADPH.

Belongs to the GTP cyclohydrolase I family. QueF type 2 subfamily. In terms of assembly, homodimer.

The protein resides in the cytoplasm. The enzyme catalyses 7-aminomethyl-7-carbaguanine + 2 NADP(+) = 7-cyano-7-deazaguanine + 2 NADPH + 3 H(+). The protein operates within tRNA modification; tRNA-queuosine biosynthesis. Its function is as follows. Catalyzes the NADPH-dependent reduction of 7-cyano-7-deazaguanine (preQ0) to 7-aminomethyl-7-deazaguanine (preQ1). The polypeptide is NADPH-dependent 7-cyano-7-deazaguanine reductase (Escherichia coli O139:H28 (strain E24377A / ETEC)).